The primary structure comprises 86 residues: Large ribosomal subunit protein bL27 (86 aa).

A compositionally biased stretch (gly residues) spans 1–10 (MAQKKGGGST). The interval 1-20 (MAQKKGGGSTRNGRDSESKR) is disordered.

The protein belongs to the bacterial ribosomal protein bL27 family.

The polypeptide is Large ribosomal subunit protein bL27 (Polynucleobacter necessarius subsp. necessarius (strain STIR1)).